Here is a 257-residue protein sequence, read N- to C-terminus: PHD finger protein Alfin1 (257 aa).

Residues 145–200 (SKDQLTAHNNGSNSKYKSSGKSRQSESQTKGVKMSAPVKEEVDSGEEEEEDDDEQG) form a disordered region. The segment covering 153–166 (NNGSNSKYKSSGKS) has biased composition (low complexity). A compositionally biased stretch (acidic residues) spans 187–199 (DSGEEEEEDDDEQ). The PHD-type zinc-finger motif lies at 200 to 252 (GATCGACGDNYGTDEFWICCDMCEKWFHGKCVKITPAKAEHIKQYKCPGCSIK).

This sequence belongs to the Alfin family. In terms of assembly, interacts with H3K4me3 and to a lesser extent with H3K4me2. As to expression, predominantly expressed in the roots.

The protein resides in the nucleus. Functionally, histone-binding component that specifically recognizes H3 tails trimethylated on 'Lys-4' (H3K4me3), which mark transcription start sites of virtually all active genes. Transcriptional regulator that binds specifically to DNA sequences 5'-GNGGTG-3' or 5'-GTGGNG-3', including promoter elements of the salt-inducible PRP2 gene. Plays a role in salinity tolerance. The sequence is that of PHD finger protein Alfin1 (ALFIN-1) from Medicago sativa (Alfalfa).